We begin with the raw amino-acid sequence, 519 residues long: Mannosyl-oligosaccharide alpha-1,2-mannosidase (519 aa).

The signal sequence occupies residues 1–22; that stretch reads MKGSPVLAVCAAALTLIPSVVA. Asparagine 187 carries N-linked (GlcNAc...) asparagine glycosylation. Cysteine 337 and cysteine 366 are oxidised to a cystine. Glutamate 380 acts as the Proton donor in catalysis. A glycan (N-linked (GlcNAc...) asparagine) is linked at asparagine 443. Threonine 507 lines the Ca(2+) pocket.

The protein belongs to the glycosyl hydrolase 47 family. Monomer. Ca(2+) serves as cofactor. Mg(2+) is required as a cofactor.

The protein resides in the secreted. The enzyme catalyses N(4)-(alpha-D-Man-(1-&gt;2)-alpha-D-Man-(1-&gt;2)-alpha-D-Man-(1-&gt;3)-[alpha-D-Man-(1-&gt;2)-alpha-D-Man-(1-&gt;3)-[alpha-D-Man-(1-&gt;2)-alpha-D-Man-(1-&gt;6)]-alpha-D-Man-(1-&gt;6)]-beta-D-Man-(1-&gt;4)-beta-D-GlcNAc-(1-&gt;4)-beta-D-GlcNAc)-L-asparaginyl-[protein] (N-glucan mannose isomer 9A1,2,3B1,2,3) + 4 H2O = N(4)-(alpha-D-Man-(1-&gt;3)-[alpha-D-Man-(1-&gt;3)-[alpha-D-Man-(1-&gt;6)]-alpha-D-Man-(1-&gt;6)]-beta-D-Man-(1-&gt;4)-beta-D-GlcNAc-(1-&gt;4)-beta-D-GlcNAc)-L-asparaginyl-[protein] (N-glucan mannose isomer 5A1,2) + 4 beta-D-mannose. The catalysed reaction is N(4)-(alpha-D-Man-(1-&gt;2)-alpha-D-Man-(1-&gt;2)-alpha-D-Man-(1-&gt;3)-[alpha-D-Man-(1-&gt;3)-[alpha-D-Man-(1-&gt;2)-alpha-D-Man-(1-&gt;6)]-alpha-D-Man-(1-&gt;6)]-beta-D-Man-(1-&gt;4)-beta-D-GlcNAc-(1-&gt;4)-beta-D-GlcNAc)-L-asparaginyl-[protein] (N-glucan mannose isomer 8A1,2,3B1,3) + 3 H2O = N(4)-(alpha-D-Man-(1-&gt;3)-[alpha-D-Man-(1-&gt;3)-[alpha-D-Man-(1-&gt;6)]-alpha-D-Man-(1-&gt;6)]-beta-D-Man-(1-&gt;4)-beta-D-GlcNAc-(1-&gt;4)-beta-D-GlcNAc)-L-asparaginyl-[protein] (N-glucan mannose isomer 5A1,2) + 3 beta-D-mannose. It participates in protein modification; protein glycosylation. In terms of biological role, alpha-mannosidase involved in the maturation of Asn-linked oligosaccharides. Progressively trims alpha-1,2-linked mannose residues from Man(9)GlcNAc(2) to produce Man(5)GlcNAc(2). This is Mannosyl-oligosaccharide alpha-1,2-mannosidase from Coccidioides posadasii (strain RMSCC 757 / Silveira) (Valley fever fungus).